Here is a 431-residue protein sequence, read N- to C-terminus: Adenylosuccinate synthetase (431 aa).

Residues 15–21 (GDEGKGK) and 43–45 (GHT) contribute to the GTP site. Asp16 functions as the Proton acceptor in the catalytic mechanism. Positions 16 and 43 each coordinate Mg(2+). IMP contacts are provided by residues 16–19 (DEGK), 41–44 (NAGH), Thr135, Arg149, Asn227, Thr242, and Arg306. The active-site Proton donor is the His44. 302 to 308 (VTTGRKR) contributes to the substrate binding site. Residues Arg308, 334–336 (KLD), and 416–418 (GVG) each bind GTP.

This sequence belongs to the adenylosuccinate synthetase family. As to quaternary structure, homodimer. The cofactor is Mg(2+).

It localises to the cytoplasm. The enzyme catalyses IMP + L-aspartate + GTP = N(6)-(1,2-dicarboxyethyl)-AMP + GDP + phosphate + 2 H(+). The protein operates within purine metabolism; AMP biosynthesis via de novo pathway; AMP from IMP: step 1/2. Functionally, plays an important role in the de novo pathway and in the salvage pathway of purine nucleotide biosynthesis. Catalyzes the first committed step in the biosynthesis of AMP from IMP. This chain is Adenylosuccinate synthetase, found in Monosiga brevicollis (Choanoflagellate).